Reading from the N-terminus, the 320-residue chain is Zinc finger Ran-binding domain-containing protein 2 (320 aa).

Ser9 carries the post-translational modification Phosphoserine. Residues Ser9–Thr40 form a RanBP2-type 1 zinc finger. An N6-acetyllysine mark is found at Lys18, Lys54, and Lys92. The segment at Ser65–Ala94 adopts a RanBP2-type 2 zinc-finger fold. The tract at residues Arg117–Pro320 is disordered. Ser120, Ser153, Ser181, Ser188, and Ser193 each carry phosphoserine. The span at Asp150–Asp163 shows a compositional bias: acidic residues. The segment at Lys151–Pro320 is required for nuclear targeting. The span at Lys196–His210 shows a compositional bias: basic residues. Low complexity-rich tracts occupy residues Ser211–Arg224 and Arg232–Arg242. A compositionally biased stretch (basic residues) spans Ser251–Ser273.

The protein belongs to the ZRANB2 family. As to quaternary structure, interacts with the C-terminal half of SNRP70/U1-70K, the Arg/Ser-rich domain of AKAP17A as well as with U2AF1 and CLK1. Post-translationally, phosphorylated on Ser-310 upon DNA damage, probably by ATM or ATR.

The protein resides in the nucleus. Functionally, splice factor required for alternative splicing of TRA2B/SFRS10 transcripts. Binds to ssRNA containing the consensus sequence 5'-AGGUAA-3'. May interfere with constitutive 5'-splice site selection. The chain is Zinc finger Ran-binding domain-containing protein 2 from Pongo abelii (Sumatran orangutan).